Consider the following 207-residue polypeptide: Ribonuclease HII (207 aa).

The region spanning 19–207 is the RNase H type-2 domain; the sequence is HCIAGVDEVG…PVKKALGIEE (189 aa). A divalent metal cation contacts are provided by Asp-25, Glu-26, and Asp-117.

This sequence belongs to the RNase HII family. Mn(2+) is required as a cofactor. Requires Mg(2+) as cofactor.

It is found in the cytoplasm. The enzyme catalyses Endonucleolytic cleavage to 5'-phosphomonoester.. Functionally, endonuclease that specifically degrades the RNA of RNA-DNA hybrids. This chain is Ribonuclease HII, found in Vibrio vulnificus (strain CMCP6).